Reading from the N-terminus, the 189-residue chain is UPF0251 protein MTH_1178 (189 aa).

Belongs to the UPF0251 family.

In Methanothermobacter thermautotrophicus (strain ATCC 29096 / DSM 1053 / JCM 10044 / NBRC 100330 / Delta H) (Methanobacterium thermoautotrophicum), this protein is UPF0251 protein MTH_1178.